Reading from the N-terminus, the 347-residue chain is Trace amine-associated receptor 4 (347 aa).

The Extracellular segment spans residues 1-37 (MNTPDPWSSPEVQFCFAAANSSCPRKARPALVVCAMY). An N-linked (GlcNAc...) asparagine glycan is attached at N20. 2 disulfides stabilise this stretch: C23-C187 and C106-C191. The helical transmembrane segment at 38-58 (LIMIGAIVMTMLGNMAVIISI) threads the bilayer. Residues 59–69 (AHFKQLHSPTN) are Cytoplasmic-facing. Residues 70–90 (FLILSMATTDFLLSCVVMPFS) form a helical membrane-spanning segment. Residues 91 to 110 (MIRSIESCWYFGDLFCKVHS) are Extracellular-facing. Residues 111–129 (CCDIMLCTTSIFHLCFISV) traverse the membrane as a helical segment. Over 130-149 (DRHYAVCDPLHYVTQITTRV) the chain is Cytoplasmic. The chain crosses the membrane as a helical span at residues 150–170 (VGVFLLISWSVPIFFAFGLVF). The Extracellular segment spans residues 171–197 (SELNLIGAEDFVAAIDCTGLCVLIFNK). The extracellular Loop 2 (ECL2) stretch occupies residues 175-188 (LIGAEDFVAAIDCT). A helical transmembrane segment spans residues 198 to 218 (LWGVLASFIAFFLPGTVMVGI). At 219–260 (YIHIFTVAQKHARQIGTGPRTKQALSESKMKATSKKESKATK) the chain is on the cytoplasmic side. A helical membrane pass occupies residues 261-281 (TLSIVMGVFVLCWLPFFVLTI). Topologically, residues 282-296 (TDPFIDFTTPEDLYN) are extracellular. The chain crosses the membrane as a helical span at residues 297 to 317 (VFLWLGYFNSTFNPIIYGMFY). The Cytoplasmic segment spans residues 318-347 (PWFRKALRMIVTGTIFRSDSSTSSLHPAHP).

The protein belongs to the G-protein coupled receptor 1 family. As to expression, specifically expressed in neurons of the olfactory epithelium, to discrete glomeruli predominantly localized to a confined bulb region. Present in the dorsal area of the main olfactory epithelium.

It is found in the cell membrane. Olfactory receptor specific for 2-phenylethylamine, a trace amine present at high concentration in the urine of carnivore species, playing a key role in fear and avoidance responses. 2-phenylethylamine acts as a kairomone in the chemical detection of carnivore odor and triggers fear in mice. This receptor is probably mediated by the G(s)-class of G-proteins which activate adenylate cyclase. This is Trace amine-associated receptor 4 from Mus musculus (Mouse).